Here is a 137-residue protein sequence, read N- to C-terminus: uncharacterized protein (137 aa).

Transmembrane regions (helical) follow at residues 36–52 (LAPP…PFVL) and 113–129 (FYGY…IFCF).

The protein localises to the membrane. This is an uncharacterized protein from Saccharomyces cerevisiae (strain ATCC 204508 / S288c) (Baker's yeast).